Consider the following 257-residue polypeptide: Transmembrane protein 101 (257 aa).

The next 8 membrane-spanning stretches (helical) occupy residues Thr-24–Glu-40, Val-52–Gly-72, Trp-77–Gly-97, Tyr-110–Leu-130, Ser-139–Leu-159, Leu-182–Leu-202, Ile-206–His-226, and Phe-233–Leu-253.

Its subcellular location is the membrane. Functionally, may activate NF-kappa-B signaling pathways. This chain is Transmembrane protein 101 (Tmem101), found in Mus musculus (Mouse).